The sequence spans 98 residues: Keratin, high sulfur matrix protein, IIIB4 (98 aa).

Alanine 1 is subject to N-acetylalanine.

It belongs to the KRTAP type 3 family. Interacts with wool keratins. As to expression, wool.

Functionally, in the wool cortex, wool keratin intermediate filaments are embedded in an interfilamentous matrix, consisting of hair keratin-associated proteins (KRTAP), which are essential for the formation of a rigid and resistant wool shaft through their extensive disulfide bond cross-linking with abundant cysteine residues of wool keratins. The matrix proteins include the high-sulfur and high-glycine-tyrosine keratins. The chain is Keratin, high sulfur matrix protein, IIIB4 from Ovis aries (Sheep).